A 278-amino-acid chain; its full sequence is uncharacterized protein (278 aa).

This sequence belongs to the short-chain dehydrogenases/reductases (SDR) family.

This is an uncharacterized protein from Bacillus subtilis (strain 168).